The primary structure comprises 313 residues: LUC7-related splicing factor homolog (313 aa).

Residues 237-313 (RKEREEKLGS…RDRRDRDRRY (77 aa)) form a disordered region.

The protein belongs to the Luc7 family.

This Caenorhabditis elegans protein is LUC7-related splicing factor homolog.